The following is a 1086-amino-acid chain: MIGVYLRSVIFPLLFVIQTICQPPGNVFHLGFLHCDVLENNVEGSTTYINYRTSASAASIAIDKIKREGLLLGYDFKFTILYDQCDENIAAGNAIKLFAEHNVDVLFGPTTNNAAMPVFILATYYNIPLITWGITSSATLDDESRFPTAGMLSIGSRSLAVTFREVMKEYGWDQFVFAYSLEMNDEKCETLRDDFQNMVAYYGDIVLSYAVQIMDHSEEGLLAILKDVSTRGRIIVPCFHEGNSRGLHRRWMLVAARNGFVNDEYVYIFPSLRSRGYAVPQADGTFRYPWTEATGPQPGDQEALLGFQKSIFIVDMQGQGNVGSNYTQFEHEIIQRMKEPPYNCTDACASPEYQTAATYAGQLHDSVYIYGVVMDQIMKTVPNQYKNGTAFPRKMAGVFNGVGGTVAIDEGGGLQPTLFVLTLDSNNNSSLIMTVDVDQQEAVVTKHYTNEATALWSHRKGIRPPDQPICGYTGSLCPANVFFQYIGWFIAAIIIIFFTIMGAILAFIYLCHAKQQEVERQNALWQIPFKSMMTVTKKGKGEHSMRSISSVPSTISSTRSSTLSEVGETRNYLFFQIQNDVEMERVAAKKHSIRMVFDNKTCATMRQMRLIDHANLNKFIGMSLDAPQLYSVWRFCSRGSLADVIRKASMQMDGFFIYSLMKDIINGLTWIHESSHEFHGMLTSKNCLLNDRWQLKITDFGLRIFRTHDQYNKSDRLWTSPELLRTDDILGSREGDIYSFGIISAELITRSSVFDLENRKEDAEEIIYMLKKGGLQSPRPSLEHDESIEINPALLHLVRDCWTERPSERPDIKQVASQLRSMNTNRNDNLMDHVFNVLESYASTLEDEVAERMKELVEEKKKSDVLLYRMLPRQVADKLKLGQTVEPETFDIVTLFFSDVVSFTTLAGKCTPLQVVNLLNGLYTIFDGIIEQHDVYKVETIGDGYFVASGVPRRNGNEHTRNIASMSINFVKSLADFSIPHLPGEKIKIRVGFHCGSVVAGVVGLTMPRYCLFGDAVNTASRMESNSKPGQIHLSEEANQMLMRLGGFTTEPRGEVIIKGKGVMATYWLLKMDESAAPKILKKKQD.

Residues 1 to 21 (MIGVYLRSVIFPLLFVIQTIC) form the signal peptide. Residues 22–487 (QPPGNVFHLG…PANVFFQYIG (466 aa)) lie on the Extracellular side of the membrane. Asn-325, Asn-343, Asn-387, and Asn-427 each carry an N-linked (GlcNAc...) asparagine glycan. A helical membrane pass occupies residues 488-508 (WFIAAIIIIFFTIMGAILAFI). Residues 509 to 1086 (YLCHAKQQEV…APKILKKKQD (578 aa)) lie on the Cytoplasmic side of the membrane. The region spanning 560-836 (SSTLSEVGET…NDNLMDHVFN (277 aa)) is the Protein kinase domain. ATP-binding positions include 566–574 (VGETRNYLF) and Lys-589. A Guanylate cyclase domain is found at 894–1024 (TLFFSDVVSF…DAVNTASRME (131 aa)).

This sequence belongs to the adenylyl cyclase class-4/guanylyl cyclase family. As to expression, expressed in both ASEL and ASER neurons throughout late embryonic and early larval stages. In adults, expressed asymmetrically in ASE left (ASEL) sensory neuron.

The protein localises to the cell membrane. The enzyme catalyses GTP = 3',5'-cyclic GMP + diphosphate. Its function is as follows. Guanylate cyclase involved in the production of the second messenger cGMP. Regulates chemotaxis responses toward the salt ion Mg(2+) and to a lesser extent toward Cl(1-) in ASE left (ASEL) sensory neuron. This chain is Receptor-type guanylate cyclase gcy-6, found in Caenorhabditis elegans.